A 152-amino-acid polypeptide reads, in one-letter code: D-aminoacyl-tRNA deacylase (152 aa).

The Gly-cisPro motif, important for rejection of L-amino acids motif lies at 138–139; that stretch reads GP.

The protein belongs to the DTD family. In terms of assembly, homodimer.

The protein resides in the cytoplasm. It carries out the reaction glycyl-tRNA(Ala) + H2O = tRNA(Ala) + glycine + H(+). It catalyses the reaction a D-aminoacyl-tRNA + H2O = a tRNA + a D-alpha-amino acid + H(+). In terms of biological role, an aminoacyl-tRNA editing enzyme that deacylates mischarged D-aminoacyl-tRNAs. Also deacylates mischarged glycyl-tRNA(Ala), protecting cells against glycine mischarging by AlaRS. Acts via tRNA-based rather than protein-based catalysis; rejects L-amino acids rather than detecting D-amino acids in the active site. By recycling D-aminoacyl-tRNA to D-amino acids and free tRNA molecules, this enzyme counteracts the toxicity associated with the formation of D-aminoacyl-tRNA entities in vivo and helps enforce protein L-homochirality. The sequence is that of D-aminoacyl-tRNA deacylase from Chloroherpeton thalassium (strain ATCC 35110 / GB-78).